The following is a 219-amino-acid chain: Counting factor-associated protein C (219 aa).

Positions 1–16 (MKVLILLVSLISVCFS) are cleaved as a signal peptide. N-linked (GlcNAc...) asparagine glycans are attached at residues Asn74 and Asn123.

Its subcellular location is the secreted. This is Counting factor-associated protein C (cfaC) from Dictyostelium discoideum (Social amoeba).